Reading from the N-terminus, the 204-residue chain is Holliday junction branch migration complex subunit RuvA (204 aa).

The tract at residues 1-64 is domain I; the sequence is MIGRLQGILL…EDAHLLFGFA (64 aa). Positions 65–143 are domain II; it reads QKTDRTLFRE…GIKQSDFFVE (79 aa). The interval 144 to 155 is flexible linker; it reads STHIPLSPSIES. The tract at residues 156–204 is domain III; that stretch reads HSESSSDEAISALIALGYKPAEAEKMVKRVAKPELTSEQVIREALKAAL.

The protein belongs to the RuvA family. In terms of assembly, homotetramer. Forms an RuvA(8)-RuvB(12)-Holliday junction (HJ) complex. HJ DNA is sandwiched between 2 RuvA tetramers; dsDNA enters through RuvA and exits via RuvB. An RuvB hexamer assembles on each DNA strand where it exits the tetramer. Each RuvB hexamer is contacted by two RuvA subunits (via domain III) on 2 adjacent RuvB subunits; this complex drives branch migration. In the full resolvosome a probable DNA-RuvA(4)-RuvB(12)-RuvC(2) complex forms which resolves the HJ.

Its subcellular location is the cytoplasm. Functionally, the RuvA-RuvB-RuvC complex processes Holliday junction (HJ) DNA during genetic recombination and DNA repair, while the RuvA-RuvB complex plays an important role in the rescue of blocked DNA replication forks via replication fork reversal (RFR). RuvA specifically binds to HJ cruciform DNA, conferring on it an open structure. The RuvB hexamer acts as an ATP-dependent pump, pulling dsDNA into and through the RuvAB complex. HJ branch migration allows RuvC to scan DNA until it finds its consensus sequence, where it cleaves and resolves the cruciform DNA. This chain is Holliday junction branch migration complex subunit RuvA, found in Haemophilus influenzae (strain 86-028NP).